We begin with the raw amino-acid sequence, 1014 residues long: Pre-mRNA-processing ATP-dependent RNA helicase prp11 (1014 aa).

Basic residues predominate over residues 1–11 (MSRRTRSRSPP). The interval 1–149 (MSRRTRSRSP…SRFDRTERVG (149 aa)) is disordered. Composition is skewed to basic and acidic residues over residues 15 to 87 (YNRE…EYAR) and 106 to 121 (RHAE…KSDE). A Q motif motif is present at residues 418-446 (TSWSQCGLSAQTISVINSLGYEKPTSIQA). Positions 449-627 (IPAITSGRDV…RKVLKKPVEI (179 aa)) constitute a Helicase ATP-binding domain. 462–469 (AKTGSGKT) serves as a coordination point for ATP. A DEAD box motif is present at residues 575–578 (DEAD). The 165-residue stretch at 638–802 (EVEQIVEVRP…PVPKELQTLA (165 aa)) folds into the Helicase C-terminal domain. The segment at 815 to 875 (KAAGGGFGGK…PEKSTGDPTL (61 aa)) is disordered. 2 stretches are compositionally biased toward basic and acidic residues: residues 827 to 838 (SRLDETRNAERK) and 855 to 875 (AEAK…DPTL).

Belongs to the DEAD box helicase family. DDX46/PRP5 subfamily.

The protein localises to the nucleus. It carries out the reaction ATP + H2O = ADP + phosphate + H(+). Functionally, ATP-dependent RNA helicase involved in pre-spliceosome/complex A assembly and mRNA splicing. Bridges U1 and U2 snRNPs during pre-spliceosome assembly and enables stable U2 snRNP association with intron RNA. Through its helicase activity probably catalyzes an ATP-dependent conformational change of U2 snRNP. In Schizosaccharomyces pombe (strain 972 / ATCC 24843) (Fission yeast), this protein is Pre-mRNA-processing ATP-dependent RNA helicase prp11 (prp11).